Reading from the N-terminus, the 170-residue chain is 3-hydroxyanthranilate 3,4-dioxygenase (170 aa).

Arg44 contacts O2. The Fe cation site is built by His48, Glu54, and His92. Glu54 is a binding site for substrate. Substrate-binding residues include Arg96 and Glu106. 4 residues coordinate a divalent metal cation: Cys121, Cys124, Cys158, and Cys161.

It belongs to the 3-HAO family. The cofactor is Fe(2+).

The protein resides in the cytoplasm. It carries out the reaction 3-hydroxyanthranilate + O2 = (2Z,4Z)-2-amino-3-carboxymuconate 6-semialdehyde. It participates in cofactor biosynthesis; NAD(+) biosynthesis; quinolinate from L-kynurenine: step 3/3. In terms of biological role, catalyzes the oxidative ring opening of 3-hydroxyanthranilate to 2-amino-3-carboxymuconate semialdehyde, which spontaneously cyclizes to quinolinate. This chain is 3-hydroxyanthranilate 3,4-dioxygenase, found in Scheffersomyces stipitis (strain ATCC 58785 / CBS 6054 / NBRC 10063 / NRRL Y-11545) (Yeast).